A 340-amino-acid chain; its full sequence is Uroporphyrinogen decarboxylase (340 aa).

Residues 21–25 (RQAGR), aspartate 71, tyrosine 147, serine 202, and histidine 316 each bind substrate.

The protein belongs to the uroporphyrinogen decarboxylase family. Homodimer.

The protein resides in the cytoplasm. The enzyme catalyses uroporphyrinogen III + 4 H(+) = coproporphyrinogen III + 4 CO2. The protein operates within porphyrin-containing compound metabolism; protoporphyrin-IX biosynthesis; coproporphyrinogen-III from 5-aminolevulinate: step 4/4. Functionally, catalyzes the decarboxylation of four acetate groups of uroporphyrinogen-III to yield coproporphyrinogen-III. The protein is Uroporphyrinogen decarboxylase of Nitratiruptor sp. (strain SB155-2).